Consider the following 366-residue polypeptide: C-X-C chemokine receptor type 3 (366 aa).

Over 1–55 (MVPEMSERQEFQASEFAYLLENSSYDYGENETYFCCTSPPCPQDFSLNFDRTFLP) the chain is Extracellular. The N-linked (GlcNAc...) asparagine glycan is linked to Asn-22. Sulfotyrosine occurs at positions 25 and 27. An N-linked (GlcNAc...) asparagine glycan is attached at Asn-30. The chain crosses the membrane as a helical span at residues 56-76 (VLYSLLFVLGLLGNGVVAVVL). The Cytoplasmic portion of the chain corresponds to 77–88 (LSQRAALSSTDT). Residues 89-109 (FLLHLAVADALLVLTLPLWAV) form a helical membrane-spanning segment. The Extracellular portion of the chain corresponds to 110-124 (DAAIQWVFGSGLCKV). A disulfide bond links Cys-122 and Cys-201. The helical transmembrane segment at 125 to 145 (AGALFNINFYAGALLLACISF) threads the bilayer. Topologically, residues 146–167 (DRYLSIVHATQFYRRGPPARVA) are cytoplasmic. A helical transmembrane segment spans residues 168–188 (LTCVAVWGLCLLFALPDFIFL). Residues 189 to 221 (SSHHDNRLNATHCQYNFPQEGRTALRVLQLVAG) are Extracellular-facing. The N-linked (GlcNAc...) asparagine glycan is linked to Asn-197. A helical transmembrane segment spans residues 222–242 (FLLPLLVMAYCYARILTVLLV). Residues 243–254 (SRGQRRLRAMRL) are Cytoplasmic-facing. A helical membrane pass occupies residues 255–275 (VVVVVVAFALCWTPYHLVVLV). Over 276 to 299 (DTLMDLGALARNCGRESRVDVAKS) the chain is Extracellular. Residues 300–320 (VTSGMGYMHCCLNPLLYAFVG) traverse the membrane as a helical segment. Over 321 to 366 (VKFRERMWVLLMRLGCPDQRGHQRQPSASRRDSSWSETTEASYSGL) the chain is Cytoplasmic. Residues 339–366 (QRGHQRQPSASRRDSSWSETTEASYSGL) form a disordered region. Over residues 355–366 (WSETTEASYSGL) the composition is skewed to polar residues.

It belongs to the G-protein coupled receptor 1 family. Homomer. Forms heteromers with ACKR4. Interacts with PF4/CXCL4. Sulfation on Tyr-25 and Tyr-27 is essential for CXCL10 binding. Post-translationally, N-glycosylated.

Its subcellular location is the cell membrane. Receptor for the C-X-C chemokine CXCL9, CXCL10 and CXCL11 and mediates the proliferation, survival and angiogenic activity of mesangial cells through a heterotrimeric G-protein signaling pathway. Probably promotes cell chemotaxis response. Binds to CCL21. Upon activation by PF4, induces activated T-lymphocytes migration mediated via downstream Ras/extracellular signal-regulated kinase (ERK) signaling. In Capra hircus (Goat), this protein is C-X-C chemokine receptor type 3 (CXCR3).